Consider the following 880-residue polypeptide: Translation initiation factor IF-2 (880 aa).

The disordered stretch occupies residues K259–T281. In terms of domain architecture, tr-type G spans S379 to K548. A G1 region spans residues G388–T395. G388–T395 is a GTP binding site. The interval G413 to H417 is G2. Positions D434–G437 are G3. GTP contacts are provided by residues D434–H438 and N488–D491. Residues N488 to D491 form a G4 region. Residues S524 to K526 form a G5 region.

This sequence belongs to the TRAFAC class translation factor GTPase superfamily. Classic translation factor GTPase family. IF-2 subfamily.

Its subcellular location is the cytoplasm. One of the essential components for the initiation of protein synthesis. Protects formylmethionyl-tRNA from spontaneous hydrolysis and promotes its binding to the 30S ribosomal subunits. Also involved in the hydrolysis of GTP during the formation of the 70S ribosomal complex. The chain is Translation initiation factor IF-2 from Baumannia cicadellinicola subsp. Homalodisca coagulata.